The sequence spans 155 residues: SsrA-binding protein (155 aa).

Residues 135 to 147 (TIKRRDQERDIKK) are compositionally biased toward basic and acidic residues. A disordered region spans residues 135–155 (TIKRRDQERDIKKQMKHYNAR).

The protein belongs to the SmpB family.

The protein localises to the cytoplasm. In terms of biological role, required for rescue of stalled ribosomes mediated by trans-translation. Binds to transfer-messenger RNA (tmRNA), required for stable association of tmRNA with ribosomes. tmRNA and SmpB together mimic tRNA shape, replacing the anticodon stem-loop with SmpB. tmRNA is encoded by the ssrA gene; the 2 termini fold to resemble tRNA(Ala) and it encodes a 'tag peptide', a short internal open reading frame. During trans-translation Ala-aminoacylated tmRNA acts like a tRNA, entering the A-site of stalled ribosomes, displacing the stalled mRNA. The ribosome then switches to translate the ORF on the tmRNA; the nascent peptide is terminated with the 'tag peptide' encoded by the tmRNA and targeted for degradation. The ribosome is freed to recommence translation, which seems to be the essential function of trans-translation. This chain is SsrA-binding protein, found in Streptococcus pyogenes serotype M12 (strain MGAS2096).